The sequence spans 457 residues: uncharacterized protein (457 aa).

Lys-75 bears the N6-(pyridoxal phosphate)lysine mark.

Pyridoxal 5'-phosphate serves as cofactor.

This is an uncharacterized protein from Sinorhizobium fredii (strain NBRC 101917 / NGR234).